We begin with the raw amino-acid sequence, 498 residues long: ATP synthase subunit beta, chloroplastic (498 aa).

ATP is bound at residue 172 to 179 (GGAGVGKT).

Belongs to the ATPase alpha/beta chains family. In terms of assembly, F-type ATPases have 2 components, CF(1) - the catalytic core - and CF(0) - the membrane proton channel. CF(1) has five subunits: alpha(3), beta(3), gamma(1), delta(1), epsilon(1). CF(0) has four main subunits: a(1), b(1), b'(1) and c(9-12).

It localises to the plastid. The protein resides in the chloroplast thylakoid membrane. It carries out the reaction ATP + H2O + 4 H(+)(in) = ADP + phosphate + 5 H(+)(out). Its function is as follows. Produces ATP from ADP in the presence of a proton gradient across the membrane. The catalytic sites are hosted primarily by the beta subunits. The protein is ATP synthase subunit beta, chloroplastic of Nicotiana bigelovii (Bigelov's tobacco).